The primary structure comprises 181 residues: Probable pyruvoyl-dependent arginine decarboxylase (181 aa).

Serine 43 carries the post-translational modification Pyruvic acid (Ser).

The protein belongs to the PdaD family. Requires pyruvate as cofactor.

It carries out the reaction L-arginine + H(+) = agmatine + CO2. This chain is Probable pyruvoyl-dependent arginine decarboxylase, found in Chlorobaculum parvum (strain DSM 263 / NCIMB 8327) (Chlorobium vibrioforme subsp. thiosulfatophilum).